Here is a 255-residue protein sequence, read N- to C-terminus: Glutamate racemase (255 aa).

Substrate contacts are provided by residues 7 to 8 and 39 to 40; these read DS and YG. Catalysis depends on C70, which acts as the Proton donor/acceptor. 71–72 serves as a coordination point for substrate; the sequence is NT. C181 functions as the Proton donor/acceptor in the catalytic mechanism. A substrate-binding site is contributed by 182 to 183; that stretch reads TH.

The protein belongs to the aspartate/glutamate racemases family.

The catalysed reaction is L-glutamate = D-glutamate. It functions in the pathway cell wall biogenesis; peptidoglycan biosynthesis. In terms of biological role, provides the (R)-glutamate required for cell wall biosynthesis. This is Glutamate racemase from Helicobacter pylori (strain HPAG1).